The primary structure comprises 141 residues: Actin-depolymerizing factor 9 (141 aa).

Ser8 bears the Phosphoserine mark. Residues Ser8–Lys141 form the ADF-H domain.

It belongs to the actin-binding proteins ADF family.

The protein resides in the cytoplasm. Its subcellular location is the cytoskeleton. Its function is as follows. Does not display typical F-actin depolymerizing activity. Exhibits a high ability to stabilize and cross-link actin filaments. Functions as an actin bundling protein with the highest efficiency under acidic conditions. May play a role in the modulation of levels of histone H3 lysine 4 trimethylation and H3 lysine 9 and 14 acetylation at the FLC locus. The polypeptide is Actin-depolymerizing factor 9 (ADF9) (Arabidopsis thaliana (Mouse-ear cress)).